Reading from the N-terminus, the 101-residue chain is Large ribosomal subunit protein uL24 (101 aa).

It belongs to the universal ribosomal protein uL24 family. As to quaternary structure, part of the 50S ribosomal subunit.

Its function is as follows. One of two assembly initiator proteins, it binds directly to the 5'-end of the 23S rRNA, where it nucleates assembly of the 50S subunit. In terms of biological role, one of the proteins that surrounds the polypeptide exit tunnel on the outside of the subunit. In Streptococcus pyogenes serotype M2 (strain MGAS10270), this protein is Large ribosomal subunit protein uL24.